Here is a 417-residue protein sequence, read N- to C-terminus: Cell division protein FtsA (417 aa).

It belongs to the FtsA/MreB family. Self-interacts. Interacts with FtsZ.

Its subcellular location is the cell inner membrane. Its function is as follows. Cell division protein that is involved in the assembly of the Z ring. May serve as a membrane anchor for the Z ring. The polypeptide is Cell division protein FtsA (Pseudomonas aeruginosa (strain ATCC 15692 / DSM 22644 / CIP 104116 / JCM 14847 / LMG 12228 / 1C / PRS 101 / PAO1)).